Here is a 566-residue protein sequence, read N- to C-terminus: Oxygen-dependent choline dehydrogenase (566 aa).

Residue 7–36 coordinates FAD; sequence DYIICGAGSAGNVLATRLTEDPDVTVLLLE. Residues 180–202 form a disordered region; sequence NGYQQEGFGPMDRTVTPKGRRAS. Catalysis depends on His474, which acts as the Proton acceptor.

It belongs to the GMC oxidoreductase family. The cofactor is FAD.

It catalyses the reaction choline + A = betaine aldehyde + AH2. It carries out the reaction betaine aldehyde + NAD(+) + H2O = glycine betaine + NADH + 2 H(+). The protein operates within amine and polyamine biosynthesis; betaine biosynthesis via choline pathway; betaine aldehyde from choline (cytochrome c reductase route): step 1/1. Involved in the biosynthesis of the osmoprotectant glycine betaine. Catalyzes the oxidation of choline to betaine aldehyde and betaine aldehyde to glycine betaine at the same rate. The polypeptide is Oxygen-dependent choline dehydrogenase (Burkholderia cenocepacia (strain HI2424)).